A 145-amino-acid polypeptide reads, in one-letter code: Transcriptional regulator MraZ (145 aa).

2 consecutive SpoVT-AbrB domains span residues 5–50 (TFNH…ALPQ) and 81–124 (AHEV…DKAA).

The protein belongs to the MraZ family. In terms of assembly, forms oligomers.

It is found in the cytoplasm. The protein resides in the nucleoid. This chain is Transcriptional regulator MraZ, found in Anaeromyxobacter sp. (strain Fw109-5).